A 713-amino-acid polypeptide reads, in one-letter code: BBSome complex assembly protein BBS10 (713 aa).

This sequence belongs to the TCP-1 chaperonin family. Component of a complex composed at least of MKKS, BBS10, BBS12, TCP1, CCT2, CCT3, CCT4, CCT5 and CCT8.

It is found in the cell projection. The protein resides in the cilium. Probable molecular chaperone that assists the folding of proteins upon ATP hydrolysis. Plays a role in the assembly of BBSome, a complex involved in ciliogenesis regulating transports vesicles to the cilia. Involved in adipogenic differentiation. This Mus musculus (Mouse) protein is BBSome complex assembly protein BBS10 (Bbs10).